The chain runs to 353 residues: Photosystem II protein D1 (353 aa).

An N-acetylthreonine modification is found at T2. The residue at position 2 (T2) is a Phosphothreonine. 3 consecutive transmembrane segments (helical) span residues Y29 to S46, H118 to L133, and W142 to A156. H118 lines the chlorophyll a pocket. Y126 serves as a coordination point for pheophytin a. [CaMn4O5] cluster is bound by residues D170 and E189. Residues F197–L218 form a helical membrane-spanning segment. H198 serves as a coordination point for chlorophyll a. Residues H215 and S264–F265 each bind a quinone. H215 contacts Fe cation. Residue H272 participates in Fe cation binding. The helical transmembrane segment at F274–L288 threads the bilayer. Residues H332, E333, D342, and A344 each contribute to the [CaMn4O5] cluster site. Positions S345 to G353 are excised as a propeptide.

Belongs to the reaction center PufL/M/PsbA/D family. PSII is composed of 1 copy each of membrane proteins PsbA, PsbB, PsbC, PsbD, PsbE, PsbF, PsbH, PsbI, PsbJ, PsbK, PsbL, PsbM, PsbT, PsbX, PsbY, PsbZ, Psb30/Ycf12, at least 3 peripheral proteins of the oxygen-evolving complex and a large number of cofactors. It forms dimeric complexes. The D1/D2 heterodimer binds P680, chlorophylls that are the primary electron donor of PSII, and subsequent electron acceptors. It shares a non-heme iron and each subunit binds pheophytin, quinone, additional chlorophylls, carotenoids and lipids. D1 provides most of the ligands for the Mn4-Ca-O5 cluster of the oxygen-evolving complex (OEC). There is also a Cl(-1) ion associated with D1 and D2, which is required for oxygen evolution. The PSII complex binds additional chlorophylls, carotenoids and specific lipids. is required as a cofactor. In terms of processing, tyr-161 forms a radical intermediate that is referred to as redox-active TyrZ, YZ or Y-Z. C-terminally processed by CTPA; processing is essential to allow assembly of the oxygen-evolving complex and thus photosynthetic growth.

It is found in the plastid. Its subcellular location is the chloroplast thylakoid membrane. The enzyme catalyses 2 a plastoquinone + 4 hnu + 2 H2O = 2 a plastoquinol + O2. Photosystem II (PSII) is a light-driven water:plastoquinone oxidoreductase that uses light energy to abstract electrons from H(2)O, generating O(2) and a proton gradient subsequently used for ATP formation. It consists of a core antenna complex that captures photons, and an electron transfer chain that converts photonic excitation into a charge separation. The D1/D2 (PsbA/PsbD) reaction center heterodimer binds P680, the primary electron donor of PSII as well as several subsequent electron acceptors. In Stigeoclonium helveticum (Green alga), this protein is Photosystem II protein D1.